We begin with the raw amino-acid sequence, 468 residues long: Glutamate--tRNA ligase 2 (468 aa).

The 'HIGH' region signature appears at 9–19 (PSPTGFLHIGG). The short motif at 238 to 242 (KLSKR) is the 'KMSKS' region element. Lysine 241 is a binding site for ATP.

Belongs to the class-I aminoacyl-tRNA synthetase family. Glutamate--tRNA ligase type 1 subfamily. In terms of assembly, monomer.

The protein localises to the cytoplasm. It carries out the reaction tRNA(Glu) + L-glutamate + ATP = L-glutamyl-tRNA(Glu) + AMP + diphosphate. Functionally, catalyzes the attachment of glutamate to tRNA(Glu) in a two-step reaction: glutamate is first activated by ATP to form Glu-AMP and then transferred to the acceptor end of tRNA(Glu). The polypeptide is Glutamate--tRNA ligase 2 (Rhodospirillum centenum (strain ATCC 51521 / SW)).